Here is a 753-residue protein sequence, read N- to C-terminus: 5-methyltetrahydropteroyltriglutamate--homocysteine methyltransferase (753 aa).

Residues 17 to 20 (RELK) and lysine 117 contribute to the 5-methyltetrahydropteroyltri-L-glutamate site. L-homocysteine contacts are provided by residues 431–433 (IGS) and glutamate 484. L-methionine contacts are provided by residues 431–433 (IGS) and glutamate 484. 5-methyltetrahydropteroyltri-L-glutamate-binding positions include 515 to 516 (RC) and tryptophan 561. Residue aspartate 599 coordinates L-homocysteine. Aspartate 599 lines the L-methionine pocket. Glutamate 605 contributes to the 5-methyltetrahydropteroyltri-L-glutamate binding site. Residues histidine 641, cysteine 643, and glutamate 665 each coordinate Zn(2+). Histidine 694 (proton donor) is an active-site residue. Cysteine 726 provides a ligand contact to Zn(2+).

This sequence belongs to the vitamin-B12 independent methionine synthase family. As to quaternary structure, monomer. Zn(2+) is required as a cofactor.

The enzyme catalyses 5-methyltetrahydropteroyltri-L-glutamate + L-homocysteine = tetrahydropteroyltri-L-glutamate + L-methionine. Its pathway is amino-acid biosynthesis; L-methionine biosynthesis via de novo pathway; L-methionine from L-homocysteine (MetE route): step 1/1. Functionally, catalyzes the transfer of a methyl group from 5-methyltetrahydrofolate to homocysteine resulting in methionine formation. The protein is 5-methyltetrahydropteroyltriglutamate--homocysteine methyltransferase of Escherichia coli (strain K12).